Here is a 373-residue protein sequence, read N- to C-terminus: NADH-quinone oxidoreductase subunit D (373 aa).

It belongs to the complex I 49 kDa subunit family. NDH-1 is composed of 14 different subunits. Subunits NuoB, C, D, E, F, and G constitute the peripheral sector of the complex.

It localises to the cell inner membrane. The enzyme catalyses a quinone + NADH + 5 H(+)(in) = a quinol + NAD(+) + 4 H(+)(out). In terms of biological role, NDH-1 shuttles electrons from NADH, via FMN and iron-sulfur (Fe-S) centers, to quinones in the respiratory chain. The immediate electron acceptor for the enzyme in this species is believed to be ubiquinone. Couples the redox reaction to proton translocation (for every two electrons transferred, four hydrogen ions are translocated across the cytoplasmic membrane), and thus conserves the redox energy in a proton gradient. This is NADH-quinone oxidoreductase subunit D from Syntrophobacter fumaroxidans (strain DSM 10017 / MPOB).